The primary structure comprises 252 residues: 3-dehydroquinate dehydratase (252 aa).

3-dehydroquinate contacts are provided by residues Ser-21, 46–48 (EWR), and Arg-82. The active-site Proton donor/acceptor is His-143. Lys-170 acts as the Schiff-base intermediate with substrate in catalysis. 3-dehydroquinate contacts are provided by Arg-213, Ser-232, and Gln-236.

Belongs to the type-I 3-dehydroquinase family. As to quaternary structure, homodimer.

It catalyses the reaction 3-dehydroquinate = 3-dehydroshikimate + H2O. Its pathway is metabolic intermediate biosynthesis; chorismate biosynthesis; chorismate from D-erythrose 4-phosphate and phosphoenolpyruvate: step 3/7. Its function is as follows. Involved in the third step of the chorismate pathway, which leads to the biosynthesis of aromatic amino acids. Catalyzes the cis-dehydration of 3-dehydroquinate (DHQ) and introduces the first double bond of the aromatic ring to yield 3-dehydroshikimate. The polypeptide is 3-dehydroquinate dehydratase (Salmonella paratyphi A (strain ATCC 9150 / SARB42)).